The sequence spans 86 residues: Small ribosomal subunit protein uS15 (86 aa).

Residues 1–10 are compositionally biased toward polar residues; that stretch reads MSIDTQSIIE. A disordered region spans residues 1-21; the sequence is MSIDTQSIIENNKRSAHDTGS.

It belongs to the universal ribosomal protein uS15 family. In terms of assembly, part of the 30S ribosomal subunit. Forms a bridge to the 50S subunit in the 70S ribosome, contacting the 23S rRNA.

One of the primary rRNA binding proteins, it binds directly to 16S rRNA where it helps nucleate assembly of the platform of the 30S subunit by binding and bridging several RNA helices of the 16S rRNA. Functionally, forms an intersubunit bridge (bridge B4) with the 23S rRNA of the 50S subunit in the ribosome. The protein is Small ribosomal subunit protein uS15 of Xylella fastidiosa (strain 9a5c).